A 152-amino-acid chain; its full sequence is Transposase for insertion sequence element IS200 (152 aa).

The Mg(2+) site is built by His61 and His63. Tyr125 functions as the Nucleophile in the catalytic mechanism. Gln129 lines the Mg(2+) pocket.

This sequence belongs to the transposase 17 family. Homodimer. It depends on Mg(2+) as a cofactor.

In terms of biological role, transposase responsible for transposition of the IS200 insertion sequence (IS) element. Transposition occurs in 2 main steps, excision from the donor DNA 'top strand' into a single strand circle and its subsequent reinsertion into the DNA target. This increases the copy number of the IS. The sequence is that of Transposase for insertion sequence element IS200 (tnpA1) from Salmonella typhi.